The chain runs to 871 residues: Alanine--tRNA ligase (871 aa).

Positions 561, 565, 662, and 666 each coordinate Zn(2+).

Belongs to the class-II aminoacyl-tRNA synthetase family. It depends on Zn(2+) as a cofactor.

It localises to the cytoplasm. The catalysed reaction is tRNA(Ala) + L-alanine + ATP = L-alanyl-tRNA(Ala) + AMP + diphosphate. Functionally, catalyzes the attachment of alanine to tRNA(Ala) in a two-step reaction: alanine is first activated by ATP to form Ala-AMP and then transferred to the acceptor end of tRNA(Ala). Also edits incorrectly charged Ser-tRNA(Ala) and Gly-tRNA(Ala) via its editing domain. The sequence is that of Alanine--tRNA ligase from Dechloromonas aromatica (strain RCB).